Here is a 443-residue protein sequence, read N- to C-terminus: Enolase B (443 aa).

Substrate-binding residues include His156 and Glu165. Glu208 serves as the catalytic Proton donor. Residues Asp243, Glu296, and Asp323 each contribute to the Mg(2+) site. Glu296 and Asp323 together coordinate substrate. The active-site Proton acceptor is Lys348. Substrate-binding positions include 375 to 378 (SHRS) and Lys399.

This sequence belongs to the enolase family. Homodimer. Requires Mg(2+) as cofactor.

The protein localises to the cytoplasm. It carries out the reaction (2R)-2-phosphoglycerate = phosphoenolpyruvate + H2O. It functions in the pathway carbohydrate degradation; glycolysis; pyruvate from D-glyceraldehyde 3-phosphate: step 4/5. This chain is Enolase B (enoB), found in Dictyostelium discoideum (Social amoeba).